The chain runs to 455 residues: Retinoic acid receptor beta (455 aa).

Residues 1-87 (MTTSSRTCPV…PLPPPRVYKP (87 aa)) form a modulating region. The interval 44–78 (LQSHPPTSGCSTPSPATVETQSTSSEELVPSPPSP) is disordered. Polar residues predominate over residues 47–66 (HPPTSGCSTPSPATVETQST). NR C4-type zinc fingers lie at residues 88–108 (CFVC…CEGC) and 124–148 (CHRD…LQKC). Residues 88 to 153 (CFVCQDKSSG…RLQKCFEVGM (66 aa)) constitute a DNA-binding region (nuclear receptor). A hinge region spans residues 154–182 (SKESVRNDRNKKKKEPTKQESTENYEMTA). An NR LBD domain is found at 183–417 (ELDDLTEKIR…PLIQEMLENS (235 aa)). The interval 416–455 (NSEGHEPLTPTSNGNTAEHSPSISPSSVDNSSVSQSPMVQ) is disordered. Over residues 424–434 (TPTSNGNTAEH) the composition is skewed to polar residues. Positions 435–455 (SPSISPSSVDNSSVSQSPMVQ) are enriched in low complexity.

It belongs to the nuclear hormone receptor family. NR1 subfamily. As to quaternary structure, heterodimer; with a RXR molecule. Binds DNA preferentially as a RAR/RXR heterodimer.

It localises to the nucleus. Receptor for retinoic acid. Retinoic acid receptors bind as heterodimers to their target response elements in response to their ligands, all-trans or 9-cis retinoic acid, and regulate gene expression in various biological processes. The RAR/RXR heterodimers bind to the retinoic acid response elements (RARE) composed of tandem 5'-AGGTCA-3' sites known as DR1-DR5. Required for limb and craniofacial development. The polypeptide is Retinoic acid receptor beta (RARB) (Gallus gallus (Chicken)).